A 953-amino-acid polypeptide reads, in one-letter code: 26S proteasome non-ATPase regulatory subunit 1 (953 aa).

M1 is subject to N-acetylmethionine; partial. T273 bears the Phosphothreonine mark. The disordered stretch occupies residues 279–318; the sequence is PGSTNTGTVPGSEKDSDSMETEEKTGSAFVGKTPEASPEP. At S290 the chain carries Phosphoserine. Basic and acidic residues predominate over residues 290 to 303; the sequence is SEKDSDSMETEEKT. Residue K310 is modified to N6-acetyllysine. T311 is modified (phosphothreonine). Position 315 is a phosphoserine (S315). 10 PC repeats span residues 403–436, 441–474, 476–510, 511–545, 547–580, 581–616, 617–649, 651–685, 686–726, and 729–761; these read TATA…PGSA, GGLY…DIVR, GGSL…VTGE, AAGL…EKIL, GLAV…ILRR, SGMY…DVRR, AAVE…PHVR, GAAM…YVRQ, GALI…DVMA, and GAIL…PSVV. At K720 the chain carries N6-acetyllysine. A Phosphothreonine modification is found at T830. S834 carries the post-translational modification Phosphoserine. 2 disordered regions span residues 839 to 881 and 930 to 953; these read AKKK…LDNP and AHGP…YIDD. Composition is skewed to basic and acidic residues over residues 842–852 and 859–872; these read KEKEKEKKEEE and AEKK…KEPE. The span at 936–953 shows a compositional bias: acidic residues; that stretch reads EEEEQEPEPPEPFEYIDD.

The protein belongs to the proteasome subunit S1 family. In terms of assembly, component of the 19S proteasome regulatory particle complex. The 26S proteasome consists of a 20S core particle (CP) and two 19S regulatory subunits (RP). The regulatory particle is made of a lid composed of 9 subunits, a base containing 6 ATPases and few additional components including PSMD1. Interacts with ADRM1. Interacts with ZFAND1.

Functionally, component of the 26S proteasome, a multiprotein complex involved in the ATP-dependent degradation of ubiquitinated proteins. This complex plays a key role in the maintenance of protein homeostasis by removing misfolded or damaged proteins, which could impair cellular functions, and by removing proteins whose functions are no longer required. Therefore, the proteasome participates in numerous cellular processes, including cell cycle progression, apoptosis, or DNA damage repair. This Pongo abelii (Sumatran orangutan) protein is 26S proteasome non-ATPase regulatory subunit 1 (PSMD1).